The chain runs to 291 residues: Pituitary-specific positive transcription factor 1 (291 aa).

The short motif at 5–13 (PFTSTDTFI) is the 9aaTAD element. The 75-residue stretch at 124-198 (MDSPEIRELE…ILSKWLEEAE (75 aa)) folds into the POU-specific domain. The homeobox DNA-binding region spans 214 to 273 (KRKRRTTISIAAKDALERHFGEQNKPSSQEILRMAEELNLEKEVVRVWFCNRRQREKRVK).

It belongs to the POU transcription factor family. Class-1 subfamily. As to quaternary structure, interacts with PITX1. Interacts with LHX3. Interacts with ELK1.

The protein localises to the nucleus. Its function is as follows. Transcription factor involved in the specification of the lactotrope, somatotrope, and thyrotrope phenotypes in the developing anterior pituitary. Activates growth hormone and prolactin genes. Specifically binds to the consensus sequence 5'-TAAAT-3'. In Bos taurus (Bovine), this protein is Pituitary-specific positive transcription factor 1 (POU1F1).